A 28-amino-acid chain; its full sequence is uncharacterized protein (28 aa).

This is an uncharacterized protein from Spiroplasma virus 4 (SpV4).